The chain runs to 209 residues: Urease accessory protein UreG (209 aa).

18-25 (GPVGSGKT) contacts GTP.

It belongs to the SIMIBI class G3E GTPase family. UreG subfamily. In terms of assembly, homodimer. UreD, UreF and UreG form a complex that acts as a GTP-hydrolysis-dependent molecular chaperone, activating the urease apoprotein by helping to assemble the nickel containing metallocenter of UreC. The UreE protein probably delivers the nickel.

The protein localises to the cytoplasm. Its function is as follows. Facilitates the functional incorporation of the urease nickel metallocenter. This process requires GTP hydrolysis, probably effectuated by UreG. This Cupriavidus necator (strain ATCC 17699 / DSM 428 / KCTC 22496 / NCIMB 10442 / H16 / Stanier 337) (Ralstonia eutropha) protein is Urease accessory protein UreG.